The following is an 884-amino-acid chain: E3 SUMO-protein ligase SIZ1 (884 aa).

The SAP domain occupies 11–45; sequence LSYFRIKELKDVLTQLGLSKQGKKQELVDRILTLL. Residues 84–103 are disordered; sequence LASKGQVSSDTSNLKVKGEP. Positions 88–97 are enriched in polar residues; the sequence is GQVSSDTSNL. A Glycyl lysine isopeptide (Lys-Gly) (interchain with G-Cter in SUMO) cross-link involves residue lysine 100. The PHD-type zinc-finger motif lies at 112-168; it reads KVRCVCGNSLETDSMIQCEDPRCHVWQHVGCVILPDKPMDGNPPLPESFYCEICRLT. Residues 346 to 429 form an SP-RING-type zinc finger; that stretch reads SDSDIEVVAD…FNRITSKMKH (84 aa). Zn(2+)-binding residues include cysteine 379, histidine 381, cysteine 402, and cysteine 405. Lysine 488 is covalently cross-linked (Glycyl lysine isopeptide (Lys-Gly) (interchain with G-Cter in SUMO)). Disordered regions lie at residues 753 to 778, 792 to 824, and 836 to 869; these read PSLQIFLPTKPDASAQSGFKNQADMS, GDSASGNHGDPATTNGINSSHQMSTREGSMDTT, and DSRQDKAKKQRSDNPFSFPRQKRSNNEQDHQTRH. Composition is skewed to polar residues over residues 766–778 and 803–824; these read SAQSGFKNQADMS and ATTNGINSSHQMSTREGSMDTT. The span at 837–847 shows a compositional bias: basic and acidic residues; it reads SRQDKAKKQRS.

Belongs to the PIAS family. As to quaternary structure, interacts (via PHD domain) with SCE1, GTE3 and GTE5. Post-translationally, autosumoylated at Lys-100 and Lys-488. In terms of tissue distribution, ubiquitous.

The protein resides in the nucleus speckle. The protein operates within protein modification; protein sumoylation. In terms of biological role, E3 SUMO protein ligase involved in regulation processes. Mediates SUMO/ attachment to PHR1, a MYB transcriptional activator controlling the phosphate deficiency responses. Functions as an upstream negative regulator of salicylic acid (SA) accumulation and subsequent SA-mediated systemic acquired resistance (SAR) signaling. Probably not involved in jasmonic acid (JA)-mediated defense response. Participates in abiotic stress-induced sumoylation. Controls heat shock-induced SUMO1 and SUMO2 conjugation and facilitates basal thermotolerance. Involved in freezing tolerance by mediating sumoylation of ICE1, a transcription activator of the cold signaling regulator CBF3/DREB1A. Acts as a positive regulator of drought stress tolerance. Acts as a floral repressor that promotes FLC expression by repressing FLD activity through sumoylation. Acts as a negative regulator of abscisic acid (ABA) signaling through ABI5 sumoylation. Mediates sumoylation of SCE1, GTE3 and GTE5. Functions as a negative regulator of SnRK1 signaling through sumoylation of several components of the SnRK1 complex. This is E3 SUMO-protein ligase SIZ1 from Arabidopsis thaliana (Mouse-ear cress).